The sequence spans 282 residues: Putative hydrolase Bmul_3283/BMULJ_05242 (282 aa).

3 residues coordinate Mg(2+): glutamate 124, glutamate 126, and aspartate 155.

This sequence belongs to the FAH family. Mg(2+) is required as a cofactor.

The chain is Putative hydrolase Bmul_3283/BMULJ_05242 from Burkholderia multivorans (strain ATCC 17616 / 249).